A 313-amino-acid polypeptide reads, in one-letter code: Porphobilinogen deaminase (313 aa).

Cysteine 241 carries the post-translational modification S-(dipyrrolylmethanemethyl)cysteine.

It belongs to the HMBS family. As to quaternary structure, monomer. It depends on dipyrromethane as a cofactor.

The enzyme catalyses 4 porphobilinogen + H2O = hydroxymethylbilane + 4 NH4(+). The protein operates within porphyrin-containing compound metabolism; protoporphyrin-IX biosynthesis; coproporphyrinogen-III from 5-aminolevulinate: step 2/4. It functions in the pathway porphyrin-containing compound metabolism; chlorophyll biosynthesis. Tetrapolymerization of the monopyrrole PBG into the hydroxymethylbilane pre-uroporphyrinogen in several discrete steps. In Chlorobium phaeobacteroides (strain DSM 266 / SMG 266 / 2430), this protein is Porphobilinogen deaminase.